The following is a 467-amino-acid chain: Membrane-bound lytic murein transglycosylase F (467 aa).

An N-terminal signal peptide occupies residues 1–33; the sequence is MTELFRHSKHLLASLALLSVLGLMLAMHPSPSA. The segment at 34 to 266 is non-LT domain; the sequence is IERIMARGEL…KLEDRFYGHV (233 aa). The tract at residues 268-467 is LT domain; the sequence is QFNLYAARSF…RRDDTLIALN (200 aa). Residue glutamate 313 is part of the active site.

It in the N-terminal section; belongs to the bacterial solute-binding protein 3 family. The protein in the C-terminal section; belongs to the transglycosylase Slt family.

The protein resides in the cell outer membrane. It carries out the reaction Exolytic cleavage of the (1-&gt;4)-beta-glycosidic linkage between N-acetylmuramic acid (MurNAc) and N-acetylglucosamine (GlcNAc) residues in peptidoglycan, from either the reducing or the non-reducing ends of the peptidoglycan chains, with concomitant formation of a 1,6-anhydrobond in the MurNAc residue.. Functionally, murein-degrading enzyme that degrades murein glycan strands and insoluble, high-molecular weight murein sacculi, with the concomitant formation of a 1,6-anhydromuramoyl product. Lytic transglycosylases (LTs) play an integral role in the metabolism of the peptidoglycan (PG) sacculus. Their lytic action creates space within the PG sacculus to allow for its expansion as well as for the insertion of various structures such as secretion systems and flagella. The protein is Membrane-bound lytic murein transglycosylase F of Alcanivorax borkumensis (strain ATCC 700651 / DSM 11573 / NCIMB 13689 / SK2).